A 126-amino-acid chain; its full sequence is MSKKFLTILAGLLLVVSSFFLSVSPAAAANATVKMGSDSGALVFEPSTVTIKAGEEVKWVNNKLSPHNIVFAADGVDADTAAKLSHKGLAFAAGESFTSTFTEPGTYTYYCEPHRGAGMVGKVVVE.

An N-terminal signal peptide occupies residues 1–28 (MSKKFLTILAGLLLVVSSFFLSVSPAAA). The region spanning 29–126 (ANATVKMGSD…AGMVGKVVVE (98 aa)) is the Plastocyanin-like domain. The Cu cation site is built by His67, Cys111, His114, and Met119.

Belongs to the plastocyanin family. The cofactor is Cu(2+).

It is found in the cellular thylakoid membrane. Functionally, participates in electron transfer between P700 and the cytochrome b6-f complex in photosystem I. The protein is Plastocyanin (petE) of Synechocystis sp. (strain ATCC 27184 / PCC 6803 / Kazusa).